A 1043-amino-acid polypeptide reads, in one-letter code: Desmoglein-1 (1043 aa).

A signal peptide spans Met1–Ser23. A propeptide spanning residues Asp24–Arg49 is cleaved from the precursor. Cadherin domains are found at residues Glu50 to Ser158, Met159 to Glu270, Leu271 to Phe385, and Arg386 to Ser498. Residues Glu50 to Pro551 lie on the Extracellular side of the membrane. 2 N-linked (GlcNAc...) asparagine glycosylation sites follow: Asn110 and Asn180. The N-linked (GlcNAc...) asparagine glycan is linked to Asn496. Residues Ala552–Met572 traverse the membrane as a helical segment. The Cytoplasmic portion of the chain corresponds to Cys573–Lys1043. The tract at residues Asp770–Pro807 is disordered. Desmoglein repeat repeat units lie at residues Thr819–Glu845, Ser846–Val875, Gly876–Ile905, Ala906–Ile933, and Gln934–Val962.

As to quaternary structure, binds to JUP/plakoglobin. Interacts with PKP2. Interacts with DSC3; there is evidence to suggest that the interaction promotes cell-cell adhesion of keratinocytes. As to expression, expressed in the epidermis. Expressed in the muzzle epithelium.

Its subcellular location is the cell membrane. It localises to the cell junction. It is found in the desmosome. The protein localises to the cytoplasm. The protein resides in the nucleus. Its function is as follows. Component of intercellular desmosome junctions. Involved in the interaction of plaque proteins and intermediate filaments mediating cell-cell adhesion. In Bos taurus (Bovine), this protein is Desmoglein-1 (DSG1).